A 119-amino-acid polypeptide reads, in one-letter code: Anamorsin homolog (119 aa).

Polar residues predominate over residues 1–15 (MSSSATSTQAFSLKT). Disordered regions lie at residues 1–21 (MSSS…PIPD) and 33–119 (LKQA…TDDV). Residues Cys-42, Cys-49, Cys-52, and Cys-54 each coordinate [2Fe-2S] cluster. The interval 42 to 54 (CTTRRRACKNCVC) is fe-S binding site A. [4Fe-4S] cluster is bound by residues Cys-81, Cys-84, Cys-92, and Cys-95. 2 consecutive short sequence motifs (cx2C motif) follow at residues 81–84 (CGNC) and 92–95 (CANC). The fe-S binding site B stretch occupies residues 81 to 95 (CGNCSKGDAFRCANC).

It belongs to the anamorsin family. Monomer. [2Fe-2S] cluster serves as cofactor. The cofactor is [4Fe-4S] cluster.

The protein resides in the cytoplasm. It is found in the mitochondrion intermembrane space. Functionally, component of the cytosolic iron-sulfur (Fe-S) protein assembly (CIA) machinery. Required for the maturation of extramitochondrial Fe-S proteins. Part of an electron transfer chain functioning in an early step of cytosolic Fe-S biogenesis, facilitating the de novo assembly of a [4Fe-4S] cluster on the cytosolic Fe-S scaffold complex. Electrons are transferred from NADPH via a FAD- and FMN-containing diflavin oxidoreductase. Together with the diflavin oxidoreductase, also required for the assembly of the diferric tyrosyl radical cofactor of ribonucleotide reductase (RNR), probably by providing electrons for reduction during radical cofactor maturation in the catalytic small subunit. This Leishmania infantum protein is Anamorsin homolog.